We begin with the raw amino-acid sequence, 520 residues long: UDP-N-acetylmuramoyl-L-alanyl-D-glutamate--2,6-diaminopimelate ligase (520 aa).

Leu-48 provides a ligand contact to UDP-N-acetyl-alpha-D-muramoyl-L-alanyl-D-glutamate. 134-140 (GTSGKTT) provides a ligand contact to ATP. Residues 176–177 (TT), Ser-203, and Arg-211 each bind UDP-N-acetyl-alpha-D-muramoyl-L-alanyl-D-glutamate. Lys-243 carries the N6-carboxylysine modification. Meso-2,6-diaminopimelate is bound by residues Arg-405, 429–432 (DNPR), Gly-483, and Glu-487. Positions 429-432 (DNPR) match the Meso-diaminopimelate recognition motif motif.

It belongs to the MurCDEF family. MurE subfamily. Requires Mg(2+) as cofactor. Post-translationally, carboxylation is probably crucial for Mg(2+) binding and, consequently, for the gamma-phosphate positioning of ATP.

It localises to the cytoplasm. The catalysed reaction is UDP-N-acetyl-alpha-D-muramoyl-L-alanyl-D-glutamate + meso-2,6-diaminopimelate + ATP = UDP-N-acetyl-alpha-D-muramoyl-L-alanyl-gamma-D-glutamyl-meso-2,6-diaminopimelate + ADP + phosphate + H(+). Its pathway is cell wall biogenesis; peptidoglycan biosynthesis. Its function is as follows. Catalyzes the addition of meso-diaminopimelic acid to the nucleotide precursor UDP-N-acetylmuramoyl-L-alanyl-D-glutamate (UMAG) in the biosynthesis of bacterial cell-wall peptidoglycan. In Mycolicibacterium paratuberculosis (strain ATCC BAA-968 / K-10) (Mycobacterium paratuberculosis), this protein is UDP-N-acetylmuramoyl-L-alanyl-D-glutamate--2,6-diaminopimelate ligase.